Consider the following 295-residue polypeptide: Tissue factor (295 aa).

A signal peptide spans 1–28; the sequence is MAIPMRPRLLAALAPTFLGFLLLQVAVG. The Extracellular portion of the chain corresponds to 29–252; sequence AGTPPGKAFN…TEQWKSVLGE (224 aa). Residues asparagine 38 and asparagine 58 are each glycosylated (N-linked (GlcNAc...) asparagine). The cysteines at positions 76 and 84 are disulfide-linked. N-linked (GlcNAc...) asparagine glycans are attached at residues asparagine 95, asparagine 109, asparagine 170, and asparagine 201. A disulfide bridge links cysteine 219 with cysteine 242. The short motif at 246–248 is the WKS motif element; it reads WKS. A helical transmembrane segment spans residues 253-275; that stretch reads TLIIVGAVVFLVTVFIILLTISL. Cysteine 276 carries S-palmitoyl cysteine lipidation. The Cytoplasmic portion of the chain corresponds to 276–295; the sequence is CKRRKNRAGQKRKNTPSRLA.

It belongs to the tissue factor family. In terms of assembly, interacts with HSPE; the interaction, inhibited by heparin, promotes the generation of activated factor X and activates coagulation in the presence of activated factor VII.

Its subcellular location is the membrane. In terms of biological role, initiates blood coagulation by forming a complex with circulating factor VII or VIIa. The [TF:VIIa] complex activates factors IX or X by specific limited proteolysis. TF plays a role in normal hemostasis by initiating the cell-surface assembly and propagation of the coagulation protease cascade. In Rattus norvegicus (Rat), this protein is Tissue factor (F3).